A 609-amino-acid chain; its full sequence is DNA mismatch repair protein MutL (609 aa).

It belongs to the DNA mismatch repair MutL/HexB family.

This protein is involved in the repair of mismatches in DNA. It is required for dam-dependent methyl-directed DNA mismatch repair. May act as a 'molecular matchmaker', a protein that promotes the formation of a stable complex between two or more DNA-binding proteins in an ATP-dependent manner without itself being part of a final effector complex. The chain is DNA mismatch repair protein MutL from Rickettsia felis (strain ATCC VR-1525 / URRWXCal2) (Rickettsia azadi).